We begin with the raw amino-acid sequence, 355 residues long: UDP-3-O-acylglucosamine N-acyltransferase (355 aa).

His-258 serves as the catalytic Proton acceptor.

It belongs to the transferase hexapeptide repeat family. LpxD subfamily. In terms of assembly, homotrimer.

It catalyses the reaction a UDP-3-O-[(3R)-3-hydroxyacyl]-alpha-D-glucosamine + a (3R)-hydroxyacyl-[ACP] = a UDP-2-N,3-O-bis[(3R)-3-hydroxyacyl]-alpha-D-glucosamine + holo-[ACP] + H(+). The protein operates within bacterial outer membrane biogenesis; LPS lipid A biosynthesis. In terms of biological role, catalyzes the N-acylation of UDP-3-O-acylglucosamine using 3-hydroxyacyl-ACP as the acyl donor. Is involved in the biosynthesis of lipid A, a phosphorylated glycolipid that anchors the lipopolysaccharide to the outer membrane of the cell. The polypeptide is UDP-3-O-acylglucosamine N-acyltransferase (Bradyrhizobium sp. (strain BTAi1 / ATCC BAA-1182)).